A 1146-amino-acid chain; its full sequence is Lysine-specific demethylase 2A (1146 aa).

The JmjC domain maps to 146–314 (FSHTKLENLV…MQLRIYSIED (169 aa)). A substrate-binding site is contributed by Thr207. 2 residues coordinate Fe cation: His210 and Asp212. Lys227 lines the substrate pocket. His282 is a Fe cation binding site. Disordered regions lie at residues 363–467 (LNGR…PDSP) and 554–585 (TKPH…SSGA). Over residues 373-387 (SSSSSSSSSGLSSSS) the composition is skewed to low complexity. Acidic residues predominate over residues 388–401 (DNDDSSDQDWEEEE). A compositionally biased stretch (basic and acidic residues) spans 402–442 (GLRKRERDRCRVERELQRKRNRDRQQRDQERDRHGRTERII). Pro residues predominate over residues 453–467 (LTPPPSLPLPTPDSP). The span at 566–584 (STAPPRTSGTPSGTTASSG) shows a compositional bias: low complexity. A CXXC-type zinc finger spans residues 585 to 631 (ARRRRVRCRKCQACVQRECGTCHYCKDMKKFGGPGRMKQSCVLRQCL). Zn(2+)-binding residues include Cys592, Cys595, Cys598, Cys603, Cys606, Cys609, Cys625, and Cys630. Residues 638–699 (SVTCALCGEV…YWECPKCYEG (62 aa)) form a PHD-type zinc finger. 2 disordered regions span residues 733-800 (VLRP…EGDR) and 832-867 (TPNP…ENVM). Pro residues predominate over residues 739 to 762 (GQSPPSPPLLLLPPSPSSAPPTPP). Basic and acidic residues predominate over residues 772-789 (SREERAKRRQLAREKENH). The segment covering 849–864 (EREEEEEEEEEEEETE) has biased composition (acidic residues). An F-box domain is found at 874–919 (STSMQKDVWLSVFHYLTHEELCICMRVCKAWYKWGCDKRLWSRIDV). 6 LRR repeats span residues 945–966 (WTNV…LKDL), 968–994 (LAGC…DLRW), 1032–1057 (GLDI…DLSH), 1058–1087 (CPLL…HLAG), 1088–1112 (CKGV…DLHG), and 1113–1138 (CKQV…CLSD).

Belongs to the JHDM1 histone demethylase family. The cofactor is Fe(2+).

The protein resides in the nucleus. The protein localises to the nucleoplasm. It catalyses the reaction N(6),N(6)-dimethyl-L-lysyl(36)-[histone H3] + 2 2-oxoglutarate + 2 O2 = L-lysyl(36)-[histone H3] + 2 formaldehyde + 2 succinate + 2 CO2. In terms of biological role, histone demethylase that specifically demethylates 'Lys-36' of histone H3, thereby playing a central role in histone code. Preferentially demethylates dimethylated H3 'Lys-36' residue while it has weak or no activity for mono- and tri-methylated H3 'Lys-36'. May also recognize and bind to some phosphorylated proteins and promote their ubiquitination and degradation. Required to maintain the heterochromatic state. Associates with centromeres and represses transcription of small non-coding RNAs that are encoded by the clusters of satellite repeats at the centromere. Required to sustain centromeric integrity and genomic stability, particularly during mitosis. May play a role in the regulation of circadian gene expression. The chain is Lysine-specific demethylase 2A (kdm2a) from Xenopus tropicalis (Western clawed frog).